The following is a 687-amino-acid chain: Amine oxidase [copper-containing] gamma 2 (687 aa).

The signal sequence occupies residues 1-24; the sequence is MVELSFSQLLVLLLSLLFLFTTLA. Asn154 is a glycosylation site (N-linked (GlcNAc...) asparagine). An intrachain disulfide couples Cys169 to Cys191. Asn244 carries N-linked (GlcNAc...) asparagine glycosylation. 333 to 344 contacts substrate; sequence YMDAGEFGLGPS. The active-site Proton acceptor is Asp335. Cys354 and Cys380 form a disulfide bridge. 420–425 provides a ligand contact to substrate; it reads VGNYDY. The active-site Schiff-base intermediate with substrate; via topaquinone is the Tyr423. At Tyr423 the chain carries 2',4',5'-topaquinone. Cu cation contacts are provided by His480 and His482. Mn(2+) contacts are provided by Asp489, Met490, and Asp491. Residues Asn497 and Asn598 are each glycosylated (N-linked (GlcNAc...) asparagine). Residues Asp632 and Ile633 each coordinate Mn(2+). His643 contacts Cu cation.

This sequence belongs to the copper/topaquinone oxidase family. In terms of assembly, homodimer. It depends on Cu cation as a cofactor. Zn(2+) serves as cofactor. Requires L-topaquinone as cofactor. The cofactor is Mn(2+). Post-translationally, topaquinone (TPQ) is generated by copper-dependent autoxidation of a specific tyrosyl residue. As to expression, expressed in roots, leaves and cotyledons.

The protein localises to the secreted. Its subcellular location is the extracellular space. It is found in the apoplast. The enzyme catalyses a primary methyl amine + O2 + H2O = an aldehyde + H2O2 + NH4(+). Its pathway is amine and polyamine degradation; putrescine degradation. In terms of biological role, copper amine oxidase that can use putrescine and spermidine as substrates. The polypeptide is Amine oxidase [copper-containing] gamma 2 (Arabidopsis thaliana (Mouse-ear cress)).